The following is a 930-amino-acid chain: Zn(2)-C6 fungal-type transcription factor FTF1c (930 aa).

A DNA-binding region (zn(2)-C6 fungal-type) is located at residues 137 to 164 (CIACRRKKIRCSGEKPACEHCLCSYIPC).

The protein resides in the nucleus. Its function is as follows. Zn(2)-C6 fungal-type transcription factor that has a role in the establishment of the fungus within the plant and/or the progress of the disease. Regulates the expression of virulence factors such as SIX1 and SIX6. The polypeptide is Zn(2)-C6 fungal-type transcription factor FTF1c (Fusarium oxysporum f. sp. lycopersici (strain 4287 / CBS 123668 / FGSC 9935 / NRRL 34936) (Fusarium vascular wilt of tomato)).